Here is a 479-residue protein sequence, read N- to C-terminus: Ribulose bisphosphate carboxylase large chain (479 aa).

Residues methionine 1 to serine 2 constitute a propeptide that is removed on maturation. The substrate site is built by asparagine 123 and threonine 173. Lysine 175 (proton acceptor) is an active-site residue. Lysine 177 contributes to the substrate binding site. Lysine 201, aspartate 203, and glutamate 204 together coordinate Mg(2+). Lysine 201 carries the N6-carboxylysine modification. Position 208 is a phosphoserine (serine 208). The Proton acceptor role is filled by histidine 294. 2 residues coordinate substrate: arginine 295 and histidine 327. The residue at position 330 (threonine 330) is a Phosphothreonine. Serine 379 contributes to the substrate binding site.

Belongs to the RuBisCO large chain family. Type I subfamily. Heterohexadecamer of 8 large chains and 8 small chains; disulfide-linked. The disulfide link is formed within the large subunit homodimers. The cofactor is Mg(2+). Post-translationally, the disulfide bond which can form in the large chain dimeric partners within the hexadecamer appears to be associated with oxidative stress and protein turnover.

It is found in the plastid. The protein localises to the chloroplast. The catalysed reaction is 2 (2R)-3-phosphoglycerate + 2 H(+) = D-ribulose 1,5-bisphosphate + CO2 + H2O. The enzyme catalyses D-ribulose 1,5-bisphosphate + O2 = 2-phosphoglycolate + (2R)-3-phosphoglycerate + 2 H(+). Its function is as follows. RuBisCO catalyzes two reactions: the carboxylation of D-ribulose 1,5-bisphosphate, the primary event in carbon dioxide fixation, as well as the oxidative fragmentation of the pentose substrate in the photorespiration process. Both reactions occur simultaneously and in competition at the same active site. This chain is Ribulose bisphosphate carboxylase large chain, found in Brassica oleracea (Wild cabbage).